The sequence spans 103 residues: Large ribosomal subunit protein uL24 (103 aa).

This sequence belongs to the universal ribosomal protein uL24 family. In terms of assembly, part of the 50S ribosomal subunit.

One of two assembly initiator proteins, it binds directly to the 5'-end of the 23S rRNA, where it nucleates assembly of the 50S subunit. Functionally, one of the proteins that surrounds the polypeptide exit tunnel on the outside of the subunit. The protein is Large ribosomal subunit protein uL24 of Anoxybacillus flavithermus (strain DSM 21510 / WK1).